The sequence spans 251 residues: Aliphatic sulfonates import ATP-binding protein SsuB (251 aa).

In terms of domain architecture, ABC transporter spans 3 to 231; that stretch reads VSINEVSKYF…PRNKTSQSFQ (229 aa). 39–46 is an ATP binding site; the sequence is GPSGCGKS.

The protein belongs to the ABC transporter superfamily. Aliphatic sulfonates importer (TC 3.A.1.17.2) family. As to quaternary structure, the complex is composed of two ATP-binding proteins (SsuB), two transmembrane proteins (SsuC) and a solute-binding protein (SsuA).

Its subcellular location is the cell membrane. The enzyme catalyses ATP + H2O + aliphatic sulfonate-[sulfonate-binding protein]Side 1 = ADP + phosphate + aliphatic sulfonateSide 2 + [sulfonate-binding protein]Side 1.. Its function is as follows. Part of the ABC transporter complex SsuABC involved in aliphatic sulfonates import. Responsible for energy coupling to the transport system. This chain is Aliphatic sulfonates import ATP-binding protein SsuB, found in Bacillus anthracis.